We begin with the raw amino-acid sequence, 277 residues long: Methylamine utilization protein MauF (277 aa).

The next 7 helical transmembrane spans lie at 33-53 (IAVL…LASA), 59-79 (LWAV…WSPC), 111-131 (YGLG…IAGF), 132-152 (SGFG…YGAH), 179-199 (WVIG…YVQT), 205-225 (MTLA…VALF), and 257-277 (ALAD…LALI).

It is found in the cell membrane. Its pathway is one-carbon metabolism; methylamine degradation. The chain is Methylamine utilization protein MauF (mauF) from Paracoccus denitrificans.